The following is a 325-amino-acid chain: Germination protease (325 aa).

The propeptide occupies 1 to 7 (MYNVRTD).

The protein belongs to the peptidase A25 family. Homotetramer. Autoproteolytically processed. The inactive tetrameric zymogen termed p46 autoprocesses to a smaller form termed p41, which is active only during spore germination.

The enzyme catalyses Endopeptidase action with P4 Glu or Asp, P1 preferably Glu &gt; Asp, P1' hydrophobic and P2' Ala.. Its function is as follows. Initiates the rapid degradation of small, acid-soluble proteins during spore germination. The protein is Germination protease of Clostridium perfringens (strain SM101 / Type A).